The sequence spans 1124 residues: Sodium/hydrogen exchanger 11 (1124 aa).

The next 11 membrane-spanning stretches (helical) occupy residues 25-45 (LVEE…GGLL), 52-72 (CEVI…HMAY), 90-110 (FSLY…DVEF), 120-140 (VLLT…YVVI), 179-199 (IYID…SIFF), 224-244 (DILG…CILA), 254-274 (IILC…LGMS), 305-325 (IFSS…IGCG), 335-355 (IPFI…TILL), 372-392 (GVVI…APDV), and 405-425 (MFIL…SYVM). Residues Asn447 and Asn473 are each glycosylated (N-linked (GlcNAc...) asparagine). The next 4 helical transmembrane spans lie at 612–632 (TGQI…WPMA), 641–661 (ISIN…KIII), 674–694 (LEFF…FVKL), and 706–726 (VIMG…IVPI). The ion transport-like stretch occupies residues 642–723 (SINYYFMFLY…IRFLPLFKII (82 aa)). Residue 867 to 999 (IWLEGKDVLI…EYKIWLKLAL (133 aa)) participates in a nucleoside 3',5'-cyclic phosphate binding.

Belongs to the monovalent cation:proton antiporter 1 (CPA1) transporter (TC 2.A.36) family.

The protein resides in the membrane. Involved in pH regulation. The chain is Sodium/hydrogen exchanger 11 (SLC9C2) from Homo sapiens (Human).